The primary structure comprises 377 residues: Glutamate 5-kinase (377 aa).

K15 serves as a coordination point for ATP. The substrate site is built by S56, D143, and N155. 175–176 (SD) is a binding site for ATP. A PUA domain is found at 281 to 358 (KGTLTIDAGA…PDVLIILGIS (78 aa)).

It belongs to the glutamate 5-kinase family.

Its subcellular location is the cytoplasm. The enzyme catalyses L-glutamate + ATP = L-glutamyl 5-phosphate + ADP. Its pathway is amino-acid biosynthesis; L-proline biosynthesis; L-glutamate 5-semialdehyde from L-glutamate: step 1/2. In terms of biological role, catalyzes the transfer of a phosphate group to glutamate to form L-glutamate 5-phosphate. This is Glutamate 5-kinase from Rhodopseudomonas palustris (strain BisA53).